The sequence spans 509 residues: Glucose-1-phosphate adenylyltransferase large subunit 4, chloroplastic/amyloplastic (509 aa).

Residues 1-36 (MATCSWAATTAAAAPPRPPARCRSRVAALRRTAAAS) constitute a chloroplast transit peptide.

It belongs to the bacterial/plant glucose-1-phosphate adenylyltransferase family. In terms of assembly, heterotetramer composed of two small and two large subunits. In terms of tissue distribution, expressed in leaves and stems.

It localises to the plastid. The protein resides in the chloroplast. It carries out the reaction alpha-D-glucose 1-phosphate + ATP + H(+) = ADP-alpha-D-glucose + diphosphate. It functions in the pathway glycan biosynthesis; starch biosynthesis. Its activity is regulated as follows. Activated by 3'phosphoglycerate, inhibited by orthophosphate. Allosteric regulation. Functionally, involved in synthesis of starch. Catalyzes the synthesis of ADP-glucose, a molecule that serves as an activated glycosyl donor for alpha-1,4-glucan synthesis. Essential for starch synthesis in leaf chloroplasts. The chain is Glucose-1-phosphate adenylyltransferase large subunit 4, chloroplastic/amyloplastic from Oryza sativa subsp. japonica (Rice).